Here is a 119-residue protein sequence, read N- to C-terminus: UPF0231 protein YPTB0717 (119 aa).

It belongs to the UPF0231 family.

The polypeptide is UPF0231 protein YPTB0717 (Yersinia pseudotuberculosis serotype I (strain IP32953)).